The following is a 245-amino-acid chain: Probable phosphatase Ent638_1550 (245 aa).

Residues His-7, His-9, His-15, His-40, Glu-73, His-101, His-131, Asp-192, and His-194 each coordinate Zn(2+).

The protein belongs to the PHP family. As to quaternary structure, homotrimer. Zn(2+) serves as cofactor.

This is Probable phosphatase Ent638_1550 from Enterobacter sp. (strain 638).